A 143-amino-acid polypeptide reads, in one-letter code: Large ribosomal subunit protein uL11 (143 aa).

The protein belongs to the universal ribosomal protein uL11 family. In terms of assembly, part of the ribosomal stalk of the 50S ribosomal subunit. Interacts with L10 and the large rRNA to form the base of the stalk. L10 forms an elongated spine to which L12 dimers bind in a sequential fashion forming a multimeric L10(L12)X complex. In terms of processing, one or more lysine residues are methylated.

Functionally, forms part of the ribosomal stalk which helps the ribosome interact with GTP-bound translation factors. The protein is Large ribosomal subunit protein uL11 of Paraburkholderia phymatum (strain DSM 17167 / CIP 108236 / LMG 21445 / STM815) (Burkholderia phymatum).